A 333-amino-acid polypeptide reads, in one-letter code: Eukaryotic translation initiation factor 2 subunit 2 (333 aa).

Disordered regions lie at residues 1–120 (MSGD…LDIM) and 139–165 (ILEK…QTGP). An N-acetylserine modification is found at Ser-2. The residue at position 2 (Ser-2) is a Phosphoserine. A Phosphoserine; by PKC; in vitro modification is found at Ser-13. A compositionally biased stretch (basic residues) spans 13–22 (SKKKKKKKKP). Position 36 is a phosphothreonine (Thr-36). Residues 40–51 (ETKEVEPEPTED) show a composition bias toward basic and acidic residues. At Ser-67 the chain carries Phosphoserine; by CK2. Positions 96–105 (EGVKDLKIEN) are enriched in basic and acidic residues. Lys-102 participates in a covalent cross-link: Glycyl lysine isopeptide (Lys-Gly) (interchain with G-Cter in SUMO2). 2 stretches are compositionally biased toward acidic residues: residues 106 to 118 (DVQE…DDLD) and 139 to 149 (ILEKDEALEDE). At Ser-158 the chain carries Phosphoserine. At Ser-218 the chain carries Phosphoserine; by PKA; in vitro. Lys-265 and Lys-293 each carry N6-acetyllysine. A C4-type zinc finger spans residues 281-305 (CHTCRSPDTILQKDTRLYFLQCETC).

This sequence belongs to the eIF-2-beta/eIF-5 family. In terms of assembly, eukaryotic translation initiation factor 2 eIF2 is a heterotrimeric complex composed of an alpha (EIF2S1), a beta (EIF2S2) and a gamma (EIF2S3) chain. eIF2 is member of the 43S pre-initiation complex (43S PIC). eIF2 forms a complex with at least CELF1/CUGBP1, CALR, CALR3, EIF2S1, EIF2S2, HSP90B1 and HSPA5. Interacts with BZW2/5MP1. Interacts with EIF5. Post-translationally, the N-terminus is blocked.

Its subcellular location is the cytoplasm. It localises to the cytosol. Component of the eIF2 complex that functions in the early steps of protein synthesis by forming a ternary complex with GTP and initiator tRNA. This complex binds to a 40S ribosomal subunit, followed by mRNA binding to form the 43S pre-initiation complex (43S PIC). Junction of the 60S ribosomal subunit to form the 80S initiation complex is preceded by hydrolysis of the GTP bound to eIF2 and release of an eIF2-GDP binary complex. In order for eIF2 to recycle and catalyze another round of initiation, the GDP bound to eIF2 must exchange with GTP by way of a reaction catalyzed by eIF2B. This Oryctolagus cuniculus (Rabbit) protein is Eukaryotic translation initiation factor 2 subunit 2 (EIF2S2).